The chain runs to 585 residues: Protein FAM13C (585 aa).

Disordered stretches follow at residues 26–45, 83–138, and 171–216; these read PVSLHEDQTDCSSLRDENNK, SMGN…NAFK, and EAAQ…APED. 2 stretches are compositionally biased toward basic and acidic residues: residues 27–45 and 99–112; these read VSLHEDQTDCSSLRDENNK and ESGRSHGESQETEH. S131 carries the phosphoserine modification. Phosphoserine is present on S238. Disordered stretches follow at residues 250–282, 349–391, and 441–477; these read FNLDPESAPSPPSTQQFMMPRSSSRCSCGDGKE, EEQG…EETP, and IPTIQEEEDSDEDRPQGSQQPSLADPASHLPVGDHLT. Over residues 262 to 275 the composition is skewed to polar residues; that stretch reads STQQFMMPRSSSRC. 2 positions are modified to phosphoserine: S385 and S386.

Belongs to the FAM13 family.

The chain is Protein FAM13C (FAM13C) from Homo sapiens (Human).